The chain runs to 297 residues: Probable esterase afoC (297 aa).

Residue serine 136 is the Charge relay system of the active site. The segment covering 204-217 (ASSSASASVSGSES) has biased composition (low complexity). Positions 204–226 (ASSSASASVSGSESAGEEEEDGH) are disordered. Residues aspartate 240 and histidine 267 each act as charge relay system in the active site.

This sequence belongs to the LovG family.

Its function is as follows. Probable esterase; part of the gene cluster that mediates the biosynthesis of asperfuranone, a probable antitumor agent. The polyketide synthase afoG is responsible for producing the 3,5-dimethyloctadienone moiety from acetyl-CoA, three malonyl-CoA, and two S-adenosyl methionines (SAM). The 3,5-dimethyloctadienone moiety is then loaded onto the SAT domain of afoE and extended with four malonyl-CoA and one SAM, which leads to the formation of 2,4-dihydroxy-6-(5,7-dimethyl-2-oxo-trans-3-trans-5-nonadienyl)-3-methylbenzaldehyde (compound 2) after reductive release and aldol condensation. AfoD is the next enzyme in the biosynthesis sequence and hydroxylates the side chain at the benzylic position of compound 2. After benzylic hydroxylation, a furan ring is formed after five-member ring hemiacetal formation and water elimination. AfoF and afoC are proposed to oxidize the R-diketone proton and to reduce the unconjugated carbonyl group, respectively, to generate asperfuranone. Since no intermediates could be isolated from afoF and afoC deletants, the sequence of these two enzymes is not fully understood. Moreover, since afoC deletant still produces a small amount of asperfuranone, other endogenous oxidoreductases might catalyze the same reaction with much less efficiency. The polypeptide is Probable esterase afoC (Emericella nidulans (strain FGSC A4 / ATCC 38163 / CBS 112.46 / NRRL 194 / M139) (Aspergillus nidulans)).